A 509-amino-acid polypeptide reads, in one-letter code: Dihydrolipoyl dehydrogenase, mitochondrial (509 aa).

Residues 1–35 (MQSWSRVYCSLAKRGHFNRISHGLQGLSAVPLRTY) constitute a mitochondrion transit peptide. Position 66 is an N6-acetyllysine; alternate (lysine 66). Lysine 66 bears the N6-succinyllysine; alternate mark. FAD contacts are provided by residues 71–80 (EKNETLGGTC) and lysine 89. A disulfide bridge links cysteine 80 with cysteine 85. Lysine 104, lysine 122, lysine 132, and lysine 143 each carry N6-acetyllysine; alternate. An N6-succinyllysine; alternate mark is found at lysine 104, lysine 122, lysine 132, and lysine 143. Glycine 154 contributes to the FAD binding site. N6-succinyllysine occurs at positions 159 and 166. Position 183 to 185 (183 to 185 (TGS)) interacts with FAD. Residues 220–227 (GAGVIGVE) and glutamate 243 each bind NAD(+). Lysine 273 and lysine 277 each carry N6-succinyllysine. Valine 278 contributes to the NAD(+) binding site. Phosphoserine occurs at positions 285 and 297. Residue glycine 314 coordinates NAD(+). The residue at position 346 (lysine 346) is an N6-acetyllysine. Residues aspartate 355 and 361 to 364 (MLAH) each bind FAD. Lysine 410 carries the N6-acetyllysine; alternate modification. At lysine 410 the chain carries N6-succinyllysine; alternate. An N6-acetyllysine mark is found at lysine 417 and lysine 420. An N6-succinyllysine modification is found at lysine 430. Catalysis depends on histidine 487, which acts as the Proton acceptor. Serine 502 is modified (phosphoserine). An N6-acetyllysine; alternate modification is found at lysine 505. Lysine 505 is subject to N6-succinyllysine; alternate.

It belongs to the class-I pyridine nucleotide-disulfide oxidoreductase family. As to quaternary structure, homodimer. Part of the multimeric pyruvate dehydrogenase complex that contains multiple copies of pyruvate dehydrogenase (subunits PDHA (PDHA1 or PDHA2) and PDHB, E1), dihydrolipoamide acetyltransferase (DLAT, E2) and lipoamide dehydrogenase (DLD, E3). These subunits are bound to an inner core composed of about 48 DLAT and 12 PDHX molecules (by non covalent bonds). The 2-oxoglutarate dehydrogenase complex is composed of OGDH (2-oxoglutarate dehydrogenase; E1), DLST (dihydrolipoamide succinyltransferase; E2), DLD (dihydrolipoamide dehydrogenase; E3) and the assembly factor KGD4. It contains multiple copies of the three enzymatic components (E1, E2 and E3). In the nucleus, the 2-oxoglutarate dehydrogenase complex associates with KAT2A. Interacts with PDHX. FAD is required as a cofactor. In terms of processing, tyrosine phosphorylated.

The protein localises to the mitochondrion matrix. It is found in the nucleus. Its subcellular location is the cell projection. It localises to the cilium. The protein resides in the flagellum. The protein localises to the cytoplasmic vesicle. It is found in the secretory vesicle. Its subcellular location is the acrosome. It catalyses the reaction N(6)-[(R)-dihydrolipoyl]-L-lysyl-[protein] + NAD(+) = N(6)-[(R)-lipoyl]-L-lysyl-[protein] + NADH + H(+). With respect to regulation, disruption of native heterodimer state inhibits primary dihydrolipoamide dehydrogenase activity and induces serine protease activity. In terms of biological role, lipoamide dehydrogenase is a component of the glycine cleavage system as well as an E3 component of three alpha-ketoacid dehydrogenase complexes (pyruvate-, alpha-ketoglutarate-, and branched-chain amino acid-dehydrogenase complex). The 2-oxoglutarate dehydrogenase complex is mainly active in the mitochondrion. A fraction of the 2-oxoglutarate dehydrogenase complex also localizes in the nucleus and is required for lysine succinylation of histones: associates with KAT2A on chromatin and provides succinyl-CoA to histone succinyltransferase KAT2A. In monomeric form may have additional moonlighting function as serine protease. Involved in the hyperactivation of spermatazoa during capacitation and in the spermatazoal acrosome reaction. The chain is Dihydrolipoyl dehydrogenase, mitochondrial (DLD) from Homo sapiens (Human).